A 687-amino-acid chain; its full sequence is MEELVGLREGSSGKPVTLQELWGPCPRIRRGVRRGLEWLKERLFRVGEDWHFLVALGVLMALISYAMNFAIGRVVRAHKWLYREVGDGHLLRYLSWTVYPVALLSFSSGFSQSISPFSGGSGLPELKTMLSGVVLEDYLDIKNFGAKVVGLSCTLATGSTIFLGKVGPFVHLSVMISAYLGRVRAKTIGETENKAKEIEMLSAAAAVGVATVFAAPFSGVLFSIEVMSSHFSVWNYWRGFFAATCGAFMFRLLGVFNSEQETITSIYKTRFRVDVPFDLPEIFFFVALGFICGVLSCAYLFCQRTFLRFIKTNRYTSRLLATSKPSYAALVALVLASITYPPGVGRFMASRLSMAEHLHSLFDNNSWALMTRNSSPPWPAEPDPQNLWLEWCHPRFTIFGTLAFFLVMKFWMLILATTIPMPAGYFMPIFIIGAAIGRLLGEALSVAFPEGIVAGREVNPIMPGGYALAGAAAFSGAVTHTISTALLAFELTGQIVHALPVLMAVLAANAISQNCQPSFYDGTIMAKKLPYLPWIRGRQIGSYPVTVEHFMNCNLTTLAKDTPLEEVVKVVTSTEVSQYPLVETRESQTLVGIVERTHLVQALQTQPASWAPGQERFLQDILAGGCPTQPVTLQLSPETSLYQAHSLFERLTLQSLFVTSRGKAVGSVSWAELKKAISTLINPPAPK.

A run of 5 helical transmembrane segments spans residues 52–72, 94–114, 161–181, 204–224, and 236–256; these read FLVA…FAIG, LSWT…SQSI, IFLG…AYLG, AAAV…LFSI, and YWRG…LGVF. Glu-259, Glu-261, Asp-278, and Glu-281 together coordinate Ca(2+). 6 helical membrane-spanning segments follow: residues 282-302, 325-345, 396-416, 417-437, 458-478, and 486-506; these read IFFF…YLFC, PSYA…PGVG, FTIF…LILA, TTIP…AAIG, VNPI…SGAV, and LLAF…MAVL. Residues 507–687 lie on the Cytoplasmic side of the membrane; it reads AANAISQNCQ…STLINPPAPK (181 aa). CBS domains lie at 551-609 and 626-687; these read MNCN…QPAS and CPTQ…PAPK.

Belongs to the chloride channel (TC 2.A.49) family. CLCNKA subfamily. As to quaternary structure, homodimer. Interacts with BSND. Expressed predominantly in the kidney. Expressed strongly in the cortical thick ascending limb and the distal convoluted tubule, with minor expression in the S3 segment of the proximal tubule and the cortical collecting tubule.

The protein localises to the basolateral cell membrane. The enzyme catalyses chloride(in) = chloride(out). It carries out the reaction bromide(in) = bromide(out). It catalyses the reaction nitrate(in) = nitrate(out). The catalysed reaction is iodide(out) = iodide(in). Activated by extracellular Ca(2+) and inhibited by extracellular acidic pH. Its function is as follows. Anion-selective channel permeable to small monovalent anions with ion selectivity for chloride &gt; bromide &gt; nitrate &gt; iodide. Forms a homodimeric channel where each subunit has its own ion conduction pathway. Conducts double-barreled currents controlled by two types of gates, two fast gates that control each subunit independently and a slow common gate that opens and shuts off both subunits simultaneously. Assembles with the regulatory subunit BSND/Barttin for sorting at the basolateral plasma membrane domain. CLCNKA:BSND channels are activated upon membrane hyperpolarization mostly controlled by fast gating. Mediates transepithelial chloride transport from the lumen to interstitial compartment along the thin ascending limb of Henle's loop, contributing to generation of hypertonic medullary interstitium as a countercurrent system to achieve urine concentration. Conducts chloride currents in the stria vascularis of the inner ear to establish the endocochlear potential necessary for normal hearing. The protein is Chloride channel protein ClC-Ka of Rattus norvegicus (Rat).